Consider the following 251-residue polypeptide: Maleate isomerase (251 aa).

Substrate is bound by residues N15, 81 to 83, Y138, and N168; that span reads CLV. C81 functions as the Nucleophile in the catalytic mechanism. At C81 the chain carries S-(2-succinyl)cysteine. The active-site Proton donor is the C199. 200-201 lines the substrate pocket; the sequence is VQ.

It belongs to the maleate isomerase family. In terms of assembly, homodimer.

It catalyses the reaction maleate = fumarate. In terms of biological role, catalyzes cis-trans isomerization of the C2-C3 double bond in maleate to yield fumarate. This chain is Maleate isomerase, found in Geobacillus stearothermophilus (Bacillus stearothermophilus).